The chain runs to 311 residues: Malate dehydrogenase (311 aa).

NAD(+) contacts are provided by residues 7–13 (GAAGGIG) and Asp-34. Arg-81 and Arg-87 together coordinate substrate. Residues Asn-94 and 117–119 (ITN) each bind NAD(+). Residues Asn-119 and Arg-153 each coordinate substrate. His-177 functions as the Proton acceptor in the catalytic mechanism. Met-227 contributes to the NAD(+) binding site.

Belongs to the LDH/MDH superfamily. MDH type 1 family. As to quaternary structure, homodimer.

It catalyses the reaction (S)-malate + NAD(+) = oxaloacetate + NADH + H(+). Its function is as follows. Catalyzes the reversible oxidation of malate to oxaloacetate. The sequence is that of Malate dehydrogenase from Shewanella halifaxensis (strain HAW-EB4).